The sequence spans 384 residues: MAKHLFTSESVSEGHPDKVADQISDAVLDAILEQDPKARVACETYVKTGMVLVGGEVTTNAWVDIEEITRRTVREIGYVNSEMGFDANSCAVLSAIGKQSPDINQGVDRADPLEQGAGDQGLMFGYATNETSVLMPAPITYAHRLVERQAEVRKNGTLPWLRPDAKSQITFQYDDGKIVGIDAVVLSTQHSDDISLTDLQEAVMEEIIKPVLPAEWLSKETKYHINPTGRFVIGGPMGDCGLTGRKIIVDTYGGMARHGGGAFSGKDPSKVDRSAAYAARYVAKNIVAAGLADRCEIQVSYAIGVAEPTSIMVETFGTGKIAEDRLVALVREFFELRPYGLIQMLDLLHPIYRKTAAYGHFGREEFPWEKTDKAALLRDAAGLK.

Histidine 15 lines the ATP pocket. Residue aspartate 17 coordinates Mg(2+). Glutamate 43 is a K(+) binding site. Glutamate 56 and glutamine 99 together coordinate L-methionine. Positions 99-109 (QSPDINQGVDR) are flexible loop. Residues 164 to 166 (DAK), 230 to 231 (RF), aspartate 239, 245 to 246 (RK), alanine 262, and lysine 266 each bind ATP. Aspartate 239 contacts L-methionine. Lysine 270 serves as a coordination point for L-methionine.

It belongs to the AdoMet synthase family. Homotetramer; dimer of dimers. Mg(2+) is required as a cofactor. It depends on K(+) as a cofactor.

The protein resides in the cytoplasm. It carries out the reaction L-methionine + ATP + H2O = S-adenosyl-L-methionine + phosphate + diphosphate. The protein operates within amino-acid biosynthesis; S-adenosyl-L-methionine biosynthesis; S-adenosyl-L-methionine from L-methionine: step 1/1. Catalyzes the formation of S-adenosylmethionine (AdoMet) from methionine and ATP. The overall synthetic reaction is composed of two sequential steps, AdoMet formation and the subsequent tripolyphosphate hydrolysis which occurs prior to release of AdoMet from the enzyme. In Yersinia enterocolitica serotype O:8 / biotype 1B (strain NCTC 13174 / 8081), this protein is S-adenosylmethionine synthase.